We begin with the raw amino-acid sequence, 472 residues long: Glutamine synthetase (472 aa).

In terms of domain architecture, GS beta-grasp spans 13–101; it reads SKARFVDLRF…TCDVIDPADG (89 aa). The GS catalytic domain maps to 108–472; that stretch reads PRSIARRAEA…PLEFEMYYSL (365 aa). Mg(2+) is bound by residues Glu-133 and Glu-135. ATP is bound at residue Glu-211. Residues Glu-216 and Glu-224 each coordinate Mg(2+). Residues 268 to 269 and Gly-269 contribute to the L-glutamate site; that span reads NG. A Mg(2+)-binding site is contributed by His-273. ATP is bound by residues 275-277 and Ser-277; that span reads HQS. L-glutamate contacts are provided by Arg-325, Glu-331, and Arg-343. ATP contacts are provided by Arg-343, Arg-348, and Lys-356. Position 361 (Glu-361) interacts with Mg(2+). Arg-363 contacts L-glutamate. An O-AMP-tyrosine modification is found at Tyr-401.

Belongs to the glutamine synthetase family. As to quaternary structure, oligomer of 12 subunits arranged in the form of two hexameric ring. Requires Mg(2+) as cofactor.

The protein resides in the cytoplasm. The catalysed reaction is L-glutamate + NH4(+) + ATP = L-glutamine + ADP + phosphate + H(+). With respect to regulation, the activity of this enzyme could be controlled by adenylation under conditions of abundant glutamine. In terms of biological role, catalyzes the ATP-dependent biosynthesis of glutamine from glutamate and ammonia. The sequence is that of Glutamine synthetase from Neisseria gonorrhoeae.